The primary structure comprises 248 residues: Tropomyosin alpha-4 chain (248 aa).

N-acetylalanine is present on Ala2. Positions 2-248 (AGLNSLEAVK…DQTLNELNCI (247 aa)) form a coiled coil. The residue at position 6 (Ser6) is a Phosphoserine. The disordered stretch occupies residues 15–47 (QALQQQADEAEDRAQGLQRELDGERERREKAEG). The span at 33-47 (RELDGERERREKAEG) shows a compositional bias: basic and acidic residues. Lys177 and Lys215 each carry N6-acetyllysine. At Thr216 the chain carries Phosphothreonine.

The protein belongs to the tropomyosin family. In terms of assembly, homodimer. Heterodimer of an alpha (TPM1, TPM3 or TPM4) and a beta (TPM2) chain. In terms of tissue distribution, detected in cardiac tissue and platelets, the form found in cardiac tissue is a higher molecular weight than the form found in platelets. Expressed at higher levels in the platelets of hypertensive patients with cardiac hypertrophy than in the platelets of hypertensive patients without cardiac hypertrophy (at protein level).

The protein localises to the cytoplasm. It is found in the cytoskeleton. Its function is as follows. Binds to actin filaments in muscle and non-muscle cells. Plays a central role, in association with the troponin complex, in the calcium dependent regulation of vertebrate striated muscle contraction. Smooth muscle contraction is regulated by interaction with caldesmon. In non-muscle cells is implicated in stabilizing cytoskeleton actin filaments. Binds calcium. Plays a role in platelet biogenesis. The protein is Tropomyosin alpha-4 chain (TPM4) of Homo sapiens (Human).